A 353-amino-acid chain; its full sequence is Inactive ADP-ribosyltransferase ARH2 (353 aa).

Residue Ser-27 is modified to Phosphoserine.

Belongs to the ADP-ribosylglycohydrolase family.

Its subcellular location is the cytoplasm. The protein resides in the myofibril. The protein localises to the sarcomere. Its function is as follows. Required for myofibril assembly and outgrowth of the cardiac chambers in the developing heart. Appears to be catalytically inactive, showing no activity against O-acetyl-ADP-ribose. The sequence is that of Inactive ADP-ribosyltransferase ARH2 (Adprhl1) from Rattus norvegicus (Rat).